Consider the following 525-residue polypeptide: Sodium-dependent lysophosphatidylcholine symporter 1 (525 aa).

A disordered region spans residues 1 to 29 (MEKESENASCAGLLGQKNEPGSPTQSRSG). Over 1–32 (MEKESENASCAGLLGQKNEPGSPTQSRSGKHK) the chain is Cytoplasmic. A helical transmembrane segment spans residues 33 to 62 (LSVCSKICFAIGGAPYQITGCALGFFLQIF). At 63–73 (LLDIAQVPPFY) the chain is on the extracellular side. A helical membrane pass occupies residues 74–94 (ASIILFSGRVWDAITDPLVGF). The Cytoplasmic segment spans residues 95–106 (FVSKSSWTRLGR). The chain crosses the membrane as a helical span at residues 107–126 (LLPWVVFSTPFAVVSYLLIW). The Extracellular segment spans residues 127–137 (FVPGFSGVSMV). Residues 138–162 (IWYLVFYCLFQTLVTCFHVPYSALT) form a helical membrane-spanning segment. At 163–169 (MFISKEQ) the chain is on the cytoplasmic side. A helical membrane pass occupies residues 170-201 (SDRDSATGYRMTVEVLGTVLGTAIQGQIVGRE). At 202 to 226 (NTPCVEHIRETHLYNTSVIMEDLNI) the chain is on the extracellular side. A disulfide bridge connects residues Cys205 and Cys458. N-linked (GlcNAc...) asparagine glycans are attached at residues Asn216 and Asn225. A helical transmembrane segment spans residues 227–260 (THDVESLSSTRDAYMIAAGVICAIYVLCAIILTL). The Cytoplasmic segment spans residues 261 to 291 (GVREKRDAYELLSDQPFSFWQGLKLVMSHKP). Residues 292–318 (YIKLITGFLFTSLAFMLLEGNFALFLT) form a helical membrane-spanning segment. Residues 319-329 (YTMGFRRDFQN) lie on the Extracellular side of the membrane. The chain crosses the membrane as a helical span at residues 330–348 (ILLVVMLSATLTVPFWQWF). Residues 349-352 (LTRF) lie on the Cytoplasmic side of the membrane. Residues 353 to 374 (GKKTAVYFGISSVIPFLILVVL) traverse the membrane as a helical segment. The Extracellular segment spans residues 375-377 (MES). Residues 378 to 414 (NLILAYVVAVAAGLSVAAAFLLPWSMLPDVIDDFILK) traverse the membrane as a helical segment. At 415-424 (NPDSHGHEPI) the chain is on the cytoplasmic side. A helical membrane pass occupies residues 425–451 (FFSFYVFFTKFASGVSLGISTLSLDFA). Over 452–463 (GYQTRACSQPEQ) the chain is Extracellular. Residues 464–487 (VNLTLKMLICVAPVILILLGLLLF) form a helical membrane-spanning segment. Over 488 to 525 (ILYPINEEKRKQNKKALQLIRESNRDSDSDSLELASNV) the chain is Cytoplasmic.

It belongs to the major facilitator superfamily.

Its subcellular location is the cell membrane. The protein resides in the endoplasmic reticulum membrane. The catalysed reaction is a 1-acyl-sn-glycero-3-phosphocholine(in) + Na(+)(in) = a 1-acyl-sn-glycero-3-phosphocholine(out) + Na(+)(out). It carries out the reaction 1-(4Z,7Z,10Z,13Z,16Z,19Z-docosahexaenoyl)-sn-glycero-3-phosphocholine(in) + Na(+)(in) = 1-(4Z,7Z,10Z,13Z,16Z,19Z-docosahexaenoyl)-sn-glycero-3-phosphocholine(out) + Na(+)(out). The enzyme catalyses 1-(9Z-octadecenoyl)-sn-glycero-3-phosphocholine(in) + Na(+)(in) = 1-(9Z-octadecenoyl)-sn-glycero-3-phosphocholine(out) + Na(+)(out). It catalyses the reaction 1-hexadecanoyl-sn-glycero-3-phosphocholine(in) + Na(+)(in) = 1-hexadecanoyl-sn-glycero-3-phosphocholine(out) + Na(+)(out). The catalysed reaction is a 1-acyl-sn-glycero-3-phosphoethanolamine(in) + Na(+)(in) = a 1-acyl-sn-glycero-3-phosphoethanolamine(out) + Na(+)(out). Sodium-dependent lysophosphatidylcholine (LPC) symporter, which plays an essential role for blood-brain barrier formation and function. Specifically expressed in endothelium of the blood-brain barrier of micro-vessels and transports LPC into the brain. Transport of LPC is essential because it constitutes the major mechanism by which docosahexaenoic acid (DHA), an omega-3 fatty acid that is essential for normal brain growth and cognitive function, enters the brain. Transports LPC carrying long-chain fatty acids such LPC oleate and LPC palmitate with a minimum acyl chain length of 14 carbons. Does not transport docosahexaenoic acid in unesterified fatty acid. The chain is Sodium-dependent lysophosphatidylcholine symporter 1 (mfsd2a) from Xenopus tropicalis (Western clawed frog).